A 111-amino-acid chain; its full sequence is Nucleoid-associated protein Fphi_0115 (111 aa).

Residues 1 to 27 (MNFDMSKLMQQAQKMQEQMKKAQQERE) are disordered. Positions 17 to 27 (EQMKKAQQERE) are enriched in basic and acidic residues.

This sequence belongs to the YbaB/EbfC family. In terms of assembly, homodimer.

It is found in the cytoplasm. It localises to the nucleoid. Binds to DNA and alters its conformation. May be involved in regulation of gene expression, nucleoid organization and DNA protection. This chain is Nucleoid-associated protein Fphi_0115, found in Francisella philomiragia subsp. philomiragia (strain ATCC 25017 / CCUG 19701 / FSC 153 / O#319-036).